We begin with the raw amino-acid sequence, 39 residues long: Omega-theraphotoxin-Asp1g (39 aa).

3 disulfide bridges follow: cysteine 4-cysteine 25, cysteine 8-cysteine 31, and cysteine 17-cysteine 36.

It belongs to the neurotoxin 12 (Hwtx-2) family. 06 (TXP1) subfamily. In terms of tissue distribution, expressed by the venom gland.

It is found in the secreted. Functionally, inhibits voltage-gated calcium channels (Cav) in rat cerebellar granule cells. Has insecticidal activity. This Aphonopelma sp. (American tarantula) protein is Omega-theraphotoxin-Asp1g.